The sequence spans 306 residues: Replication termination factor 2 (306 aa).

Residues 193–276 (AKLEKKTKKP…RSIADSEESE (84 aa)) form a disordered region. Residues 226-240 (GKPEEASLDSREKKT) show a composition bias toward basic and acidic residues. The segment covering 243-255 (APKSTAMNESSSG) has biased composition (polar residues). Residue Ser287 is modified to Phosphoserine.

Belongs to the rtf2 family. As to quaternary structure, interacts with DDI2; probably also interacts with DDI1. Undergoes proteasomal degradation, via DDI1 and DDI2. Removal from stalled replisomes and degradation are required for genome stability.

Its subcellular location is the chromosome. Its function is as follows. Replication termination factor which is a component of the elongating replisome. Required for ATR pathway signaling upon DNA damage and has a positive activity during DNA replication. Might function to facilitate fork pausing at replication fork barriers like the rDNA. May be globally required to stimulate ATR signaling after the fork stalls or encounters a lesion. Interacts with nascent DNA. The sequence is that of Replication termination factor 2 from Homo sapiens (Human).